A 210-amino-acid polypeptide reads, in one-letter code: MLTTMKKSSLVLALFAIAATALVTITYALTKDQIAYQQQQQLLSVLNQVVPKEQHDNELYKACILVKNNDALGSKQAMPIYLASLNGKHSGAAIEAIAPDGYSGNIKIIVGVDSDAIVTGVRVLSHQETPGLGDKIDIRITRWVDAFLGKTVESSEDKNWAVQKDGGQFDQFTGATITPRAVVKAVKRAVWFYKTHQEELLTLPLNCETK.

The chain crosses the membrane as a helical span at residues 9 to 29 (SLVLALFAIAATALVTITYAL). Threonine 176 carries the post-translational modification FMN phosphoryl threonine.

The protein belongs to the RnfG family. As to quaternary structure, the complex is composed of six subunits: RnfA, RnfB, RnfC, RnfD, RnfE and RnfG. FMN serves as cofactor.

It localises to the cell inner membrane. Part of a membrane-bound complex that couples electron transfer with translocation of ions across the membrane. In Aliivibrio fischeri (strain MJ11) (Vibrio fischeri), this protein is Ion-translocating oxidoreductase complex subunit G.